A 225-amino-acid polypeptide reads, in one-letter code: Ribosomal RNA large subunit methyltransferase E (225 aa).

The S-adenosyl-L-methionine site is built by G64, W66, D93, D109, and D138. The active-site Proton acceptor is the K178.

Belongs to the class I-like SAM-binding methyltransferase superfamily. RNA methyltransferase RlmE family.

The protein resides in the cytoplasm. The enzyme catalyses uridine(2552) in 23S rRNA + S-adenosyl-L-methionine = 2'-O-methyluridine(2552) in 23S rRNA + S-adenosyl-L-homocysteine + H(+). Its function is as follows. Specifically methylates the uridine in position 2552 of 23S rRNA at the 2'-O position of the ribose in the fully assembled 50S ribosomal subunit. The protein is Ribosomal RNA large subunit methyltransferase E of Cupriavidus pinatubonensis (strain JMP 134 / LMG 1197) (Cupriavidus necator (strain JMP 134)).